The primary structure comprises 381 residues: Creatine kinase M-type (381 aa).

Residues 11 to 98 enclose the Phosphagen kinase N-terminal domain; it reads KLNYKSEEEY…FDPIIQDRHG (88 aa). A Phosphagen kinase C-terminal domain is found at 125-367; the sequence is YVLSSRVRTG…KLMVEMEKKL (243 aa). 128–132 lines the ATP pocket; it reads SSRVR. The residue at position 164 (Ser-164) is a Phosphoserine. The residue at position 166 (Thr-166) is a Phosphothreonine. A Phosphoserine modification is found at Ser-178. Thr-180 bears the Phosphothreonine mark. His-191 serves as a coordination point for ATP. Ser-199 is modified (phosphoserine). Positions 236 and 292 each coordinate ATP. A phosphothreonine mark is found at Thr-313 and Thr-322. ATP is bound at residue 320–325; that stretch reads RGTGGV. At Ser-372 the chain carries Phosphoserine.

Belongs to the ATP:guanido phosphotransferase family. In terms of assembly, dimer of identical or non-identical chains, which can be either B (brain type) or M (muscle type). With MM being the major form in skeletal muscle and myocardium, MB existing in myocardium, and BB existing in many tissues, especially brain.

It catalyses the reaction creatine + ATP = N-phosphocreatine + ADP + H(+). Its function is as follows. Reversibly catalyzes the transfer of phosphate between ATP and various phosphogens (e.g. creatine phosphate). Creatine kinase isoenzymes play a central role in energy transduction in tissues with large, fluctuating energy demands, such as skeletal muscle, heart, brain and spermatozoa. The chain is Creatine kinase M-type (CKM) from Oryctolagus cuniculus (Rabbit).